The following is a 496-amino-acid chain: Glutamyl-tRNA(Gln) amidotransferase subunit A (496 aa).

Residues Lys-75 and Ser-150 each act as charge relay system in the active site. Ser-174 functions as the Acyl-ester intermediate in the catalytic mechanism.

It belongs to the amidase family. GatA subfamily. Heterotrimer of A, B and C subunits.

It catalyses the reaction L-glutamyl-tRNA(Gln) + L-glutamine + ATP + H2O = L-glutaminyl-tRNA(Gln) + L-glutamate + ADP + phosphate + H(+). Functionally, allows the formation of correctly charged Gln-tRNA(Gln) through the transamidation of misacylated Glu-tRNA(Gln) in organisms which lack glutaminyl-tRNA synthetase. The reaction takes place in the presence of glutamine and ATP through an activated gamma-phospho-Glu-tRNA(Gln). In Burkholderia vietnamiensis (strain G4 / LMG 22486) (Burkholderia cepacia (strain R1808)), this protein is Glutamyl-tRNA(Gln) amidotransferase subunit A.